A 479-amino-acid polypeptide reads, in one-letter code: MATDSWALAVDEQEAAAESLSNLHLKEEKIKPDTNGAVVKTNANAEKTDEEEKEDRAAQSLLNKLIRSNLVDNTNQVEVLQRDPNSPLYSVKSFEELRLKPQLLQGVYAMGFNRPSKIQENALPLMLAEPPQNLIAQSQSGTGKTAAFVLAMLSQVEPANKYPQCLCLSPTYELALQTGKVIEQMGKFYPELKLAYAVRGNKLERGQKISEQIVIGTPGTVLDWCSKLKFIDPKKIKVFVLDEADVMIATQGHQDQSIRIQRMLPRNCQMLLFSATFEDSVWKFAQKVVPDPNVIKLKREEETLDTIKQYYVLCSSRDEKFQALCNLYGAITIAQAMIFCHTRKTASWLAAELSKEGHQVALLSGEMMVEQRAAVIERFREGKEKVLVTTNVCARGIDVEQVSVVINFDLPVDKDGNPDNETYLHRIGRTGRFGKRGLAVNMVDSKHSMNILNRIQEHFNKKIERLDTDDLDEIEKIAN.

An N-acetylalanine modification is found at Ala-2. Residues 2–300 (ATDSWALAVD…DPNVIKLKRE (299 aa)) form an N-terminal lobe region. Positions 34-54 (TNGAVVKTNANAEKTDEEEKE) are disordered. The tract at residues 55-68 (DRAAQSLLNKLIRS) is N-terminal helix. The short motif at 92 to 120 (KSFEELRLKPQLLQGVYAMGFNRPSKIQE) is the Q motif element. Residues Gln-119 and 138–145 (SQSGTGKT) contribute to the ATP site. Residues 125-295 (LMLAEPPQNL…QKVVPDPNVI (171 aa)) form the Helicase ATP-binding domain. The short motif at 242 to 245 (DEAD) is the DEAD box element. Residues 301 to 479 (EETLDTIKQY…DLDEIEKIAN (179 aa)) are C-terminal lobe. The region spanning 306-474 (TIKQYYVLCS…RLDTDDLDEI (169 aa)) is the Helicase C-terminal domain. The ATP site is built by Arg-429 and Arg-432.

This sequence belongs to the DEAD box helicase family. DDX19/DBP5 subfamily. As to quaternary structure, associates with the nuclear pore complex via interaction with NUP214. Interacts with NUP214 or RNA in a mutually exclusive manner.

The protein localises to the cytoplasm. The protein resides in the nucleus. It localises to the nucleoplasm. The catalysed reaction is ATP + H2O = ADP + phosphate + H(+). Functionally, ATP-dependent RNA helicase involved in mRNA export from the nucleus. Rather than unwinding RNA duplexes, DDX19B functions as a remodeler of ribonucleoprotein particles, whereby proteins bound to nuclear mRNA are dissociated and replaced by cytoplasmic mRNA binding proteins. The sequence is that of ATP-dependent RNA helicase DDX19B (DDX19B) from Homo sapiens (Human).